We begin with the raw amino-acid sequence, 248 residues long: Probable transcriptional regulatory protein RL3983 (248 aa).

This sequence belongs to the TACO1 family.

The protein localises to the cytoplasm. This Rhizobium johnstonii (strain DSM 114642 / LMG 32736 / 3841) (Rhizobium leguminosarum bv. viciae) protein is Probable transcriptional regulatory protein RL3983.